A 285-amino-acid chain; its full sequence is Acetyl-coenzyme A carboxylase carboxyl transferase subunit beta (285 aa).

One can recognise a CoA carboxyltransferase N-terminal domain in the interval 33–285; that stretch reads MWIKCSKCGK…TLGNILRMHS (253 aa). Cys-37, Cys-40, Cys-56, and Cys-59 together coordinate Zn(2+). The segment at 37-59 adopts a C4-type zinc-finger fold; sequence CSKCGKILYKSDVDDNFKVCPKC.

It belongs to the AccD/PCCB family. Acetyl-CoA carboxylase is a heterohexamer composed of biotin carboxyl carrier protein (AccB), biotin carboxylase (AccC) and two subunits each of ACCase subunit alpha (AccA) and ACCase subunit beta (AccD). It depends on Zn(2+) as a cofactor.

The protein resides in the cytoplasm. It carries out the reaction N(6)-carboxybiotinyl-L-lysyl-[protein] + acetyl-CoA = N(6)-biotinyl-L-lysyl-[protein] + malonyl-CoA. Its pathway is lipid metabolism; malonyl-CoA biosynthesis; malonyl-CoA from acetyl-CoA: step 1/1. In terms of biological role, component of the acetyl coenzyme A carboxylase (ACC) complex. Biotin carboxylase (BC) catalyzes the carboxylation of biotin on its carrier protein (BCCP) and then the CO(2) group is transferred by the transcarboxylase to acetyl-CoA to form malonyl-CoA. The protein is Acetyl-coenzyme A carboxylase carboxyl transferase subunit beta of Clostridium acetobutylicum (strain ATCC 824 / DSM 792 / JCM 1419 / IAM 19013 / LMG 5710 / NBRC 13948 / NRRL B-527 / VKM B-1787 / 2291 / W).